The chain runs to 124 residues: Con-Ins Tx1 (124 aa).

The signal sequence occupies residues 1 to 24 (MTTSSYFLLVALGLLLYVFQSSFG). 4 disulfide bridges follow: C29–C107, C41–C110, C53–C123, and C109–C114. A 4-hydroxyproline; partial modification is found at P34. Residues 59–92 (EQGGANNARANTGRTSSLMKRRGFLSLLKKRGKR) constitute a propeptide, c peptide. 4-carboxyglutamate; partial is present on E118.

Belongs to the insulin family. Heterodimer of A and B chains; disulfide-linked. As to expression, expressed by the venom gland.

It is found in the secreted. This venom insulin facilitates prey capture by rapidly inducing hypoglycemic shock. Intraperitoneal injection of this peptide into zebrafish lowers blood glucose with the same potency than human insulin. In vivo, when applied to water, this peptide reduces overall locomotor activity of zebrafish larvae, observed as a significant decrease in the percentage of time spent swimming and movement frequency. The chain is Con-Ins Tx1 from Conus textile (Cloth-of-gold cone).